Consider the following 74-residue polypeptide: MERQNLIEMEGVITESLPNAMFRVHLDNGFNVLAHISGKIRRNYIRILPGDRVKIELTPYDLTKGRITYRLRKR.

One can recognise an S1-like domain in the interval Met-1–Arg-72.

It belongs to the IF-1 family. Component of the 30S ribosomal translation pre-initiation complex which assembles on the 30S ribosome in the order IF-2 and IF-3, IF-1 and N-formylmethionyl-tRNA(fMet); mRNA recruitment can occur at any time during PIC assembly.

It is found in the plastid. The protein localises to the chloroplast. Functionally, one of the essential components for the initiation of protein synthesis. Stabilizes the binding of IF-2 and IF-3 on the 30S subunit to which N-formylmethionyl-tRNA(fMet) subsequently binds. Helps modulate mRNA selection, yielding the 30S pre-initiation complex (PIC). Upon addition of the 50S ribosomal subunit IF-1, IF-2 and IF-3 are released leaving the mature 70S translation initiation complex. The polypeptide is Translation initiation factor IF-1, chloroplastic (Mesostigma viride (Green alga)).